The chain runs to 970 residues: uncharacterized protein (970 aa).

The chain crosses the membrane as a helical span at residues 12–32; that stretch reads VIFFSVFFVIFFLFIESSVGF.

To E.coli YtfN.

Its subcellular location is the membrane. This is an uncharacterized protein from Buchnera aphidicola subsp. Acyrthosiphon pisum (strain APS) (Acyrthosiphon pisum symbiotic bacterium).